A 230-amino-acid polypeptide reads, in one-letter code: Ribosomal RNA large subunit methyltransferase E (230 aa).

Residues Gly-82, Trp-84, Asp-100, Asp-116, and Asp-140 each coordinate S-adenosyl-L-methionine. Residue Lys-180 is the Proton acceptor of the active site.

It belongs to the class I-like SAM-binding methyltransferase superfamily. RNA methyltransferase RlmE family.

The protein resides in the cytoplasm. The catalysed reaction is uridine(2552) in 23S rRNA + S-adenosyl-L-methionine = 2'-O-methyluridine(2552) in 23S rRNA + S-adenosyl-L-homocysteine + H(+). Functionally, specifically methylates the uridine in position 2552 of 23S rRNA at the 2'-O position of the ribose in the fully assembled 50S ribosomal subunit. The polypeptide is Ribosomal RNA large subunit methyltransferase E (Granulibacter bethesdensis (strain ATCC BAA-1260 / CGDNIH1)).